A 482-amino-acid chain; its full sequence is 2-succinylbenzoate--CoA ligase (482 aa).

Belongs to the ATP-dependent AMP-binding enzyme family. MenE subfamily.

The enzyme catalyses 2-succinylbenzoate + ATP + CoA = 2-succinylbenzoyl-CoA + AMP + diphosphate. Its pathway is quinol/quinone metabolism; 1,4-dihydroxy-2-naphthoate biosynthesis; 1,4-dihydroxy-2-naphthoate from chorismate: step 5/7. The protein operates within quinol/quinone metabolism; menaquinone biosynthesis. Converts 2-succinylbenzoate (OSB) to 2-succinylbenzoyl-CoA (OSB-CoA). The sequence is that of 2-succinylbenzoate--CoA ligase from Bacillus cereus (strain AH820).